The following is an 879-amino-acid chain: Alanine--tRNA ligase (879 aa).

Residues 426 to 449 (KQKERARNARGNMDGESWKEDPLS) form a disordered region. Zn(2+) contacts are provided by His-566, His-570, Cys-668, and His-672.

It belongs to the class-II aminoacyl-tRNA synthetase family. Requires Zn(2+) as cofactor.

It is found in the cytoplasm. The catalysed reaction is tRNA(Ala) + L-alanine + ATP = L-alanyl-tRNA(Ala) + AMP + diphosphate. Catalyzes the attachment of alanine to tRNA(Ala) in a two-step reaction: alanine is first activated by ATP to form Ala-AMP and then transferred to the acceptor end of tRNA(Ala). Also edits incorrectly charged Ser-tRNA(Ala) and Gly-tRNA(Ala) via its editing domain. This is Alanine--tRNA ligase from Clostridioides difficile (strain 630) (Peptoclostridium difficile).